We begin with the raw amino-acid sequence, 528 residues long: Probable rhamnogalacturonate lyase A (528 aa).

The N-terminal stretch at 1-20 (MFFQTGLLLSLSLWTKVAYA) is a signal peptide. Disulfide bonds link Cys50–Cys93 and Cys184–Cys193. N-linked (GlcNAc...) asparagine glycosylation occurs at Asn56. N-linked (GlcNAc...) asparagine glycosylation occurs at Asn351.

The protein belongs to the polysaccharide lyase 4 family.

It is found in the secreted. It carries out the reaction Endotype eliminative cleavage of L-alpha-rhamnopyranosyl-(1-&gt;4)-alpha-D-galactopyranosyluronic acid bonds of rhamnogalacturonan I domains in ramified hairy regions of pectin leaving L-rhamnopyranose at the reducing end and 4-deoxy-4,5-unsaturated D-galactopyranosyluronic acid at the non-reducing end.. Pectinolytic enzymes consist of four classes of enzymes: pectin lyase, polygalacturonase, pectin methylesterase and rhamnogalacturonase. Degrades the rhamnogalacturonan I (RG-I) backbone of pectin. Active against linseed rhamnogalacturonan. The polypeptide is Probable rhamnogalacturonate lyase A (rglA) (Aspergillus clavatus (strain ATCC 1007 / CBS 513.65 / DSM 816 / NCTC 3887 / NRRL 1 / QM 1276 / 107)).